We begin with the raw amino-acid sequence, 535 residues long: Probable deoxycholate-binding periplasmic protein YgiS (535 aa).

Residues 1–20 form the signal peptide; the sequence is MYTRNLLWLVSLVSAAPLYA.

This sequence belongs to the bacterial solute-binding protein 5 family.

The protein resides in the periplasm. Probably part of a deoxycholate transport system. Its expression in the presence of deoxycholate in a ygiS deletion mutant increases intracellular deoxycholate levels and decreases cell growth; higher expression in the presence of deoxycholate inhibits cell growth completely. Bile acid detergents such as deoxycholate are important for host defense against bacterial growth in the gall bladder and duodenum. This chain is Probable deoxycholate-binding periplasmic protein YgiS (ygiS), found in Escherichia coli (strain K12).